A 279-amino-acid chain; its full sequence is Bifunctional protein FolD 1 (279 aa).

NADP(+) is bound by residues 166–168 and Ser191; that span reads GRS.

This sequence belongs to the tetrahydrofolate dehydrogenase/cyclohydrolase family. Homodimer.

The enzyme catalyses (6R)-5,10-methylene-5,6,7,8-tetrahydrofolate + NADP(+) = (6R)-5,10-methenyltetrahydrofolate + NADPH. It carries out the reaction (6R)-5,10-methenyltetrahydrofolate + H2O = (6R)-10-formyltetrahydrofolate + H(+). It functions in the pathway one-carbon metabolism; tetrahydrofolate interconversion. Its function is as follows. Catalyzes the oxidation of 5,10-methylenetetrahydrofolate to 5,10-methenyltetrahydrofolate and then the hydrolysis of 5,10-methenyltetrahydrofolate to 10-formyltetrahydrofolate. This chain is Bifunctional protein FolD 1, found in Salinispora arenicola (strain CNS-205).